The primary structure comprises 791 residues: FHF complex subunit HOOK-interacting protein 1B (791 aa).

Disordered stretches follow at residues 465 to 510 and 524 to 556; these read APSP…VPRP and SLGG…SPAE. A Phosphoserine modification is found at Ser-467. Positions 496-510 are enriched in low complexity; the sequence is SPSVDSSSVVTVPRP. Ser-524, Ser-537, Ser-543, Ser-547, and Ser-679 each carry phosphoserine. A compositionally biased stretch (low complexity) spans 541-552; the sequence is TASPTSSPGRRP. Phosphothreonine is present on Thr-708. Phosphoserine is present on Ser-716.

This sequence belongs to the FHIP family. In terms of assembly, component of the FTS/Hook/FHIP complex (FHF complex), composed of AKTIP/FTS, FHIP1B, and one or more members of the Hook family of proteins HOOK1, HOOK2, and HOOK3. The FHF complex associates with the homotypic vesicular sorting complex (the HOPS complex).

In terms of biological role, component of the FTS/Hook/FHIP complex (FHF complex). The FHF complex may function to promote vesicle trafficking and/or fusion via the homotypic vesicular protein sorting complex (the HOPS complex). FHF complex promotes the distribution of AP-4 complex to the perinuclear area of the cell. The polypeptide is FHF complex subunit HOOK-interacting protein 1B (Fhip1b) (Rattus norvegicus (Rat)).